The following is a 598-amino-acid chain: tRNA(Met) cytidine acetyltransferase TmcA (598 aa).

Residues glutamine 141, 163-172 (GRGKSTLAGK), and arginine 288 contribute to the ATP site. An N-acetyltransferase domain is found at 332–490 (TDLRRLFDAD…HSAMMLYPLS (159 aa)). Residues 411–413 (IAV), 418–424 (QNQGIGS), and arginine 462 each bind acetyl-CoA.

Belongs to the RNA cytidine acetyltransferase family. TmcA subfamily.

It localises to the cytoplasm. The enzyme catalyses cytidine(34) in elongator tRNA(Met) + acetyl-CoA + ATP + H2O = N(4)-acetylcytidine(34) in elongator tRNA(Met) + ADP + phosphate + CoA + H(+). Catalyzes the formation of N(4)-acetylcytidine (ac(4)C) at the wobble position of tRNA(Met), by using acetyl-CoA as an acetyl donor and ATP (or GTP). The protein is tRNA(Met) cytidine acetyltransferase TmcA of Haemophilus ducreyi (strain 35000HP / ATCC 700724).